The chain runs to 113 residues: Nucleoid-associated protein THA_1374 (113 aa).

This sequence belongs to the YbaB/EbfC family. Homodimer.

It is found in the cytoplasm. Its subcellular location is the nucleoid. Binds to DNA and alters its conformation. May be involved in regulation of gene expression, nucleoid organization and DNA protection. This chain is Nucleoid-associated protein THA_1374, found in Thermosipho africanus (strain TCF52B).